A 546-amino-acid chain; its full sequence is MTPGEVRRLYFIIRTFLSYGLDELIPKMRITLPLRLWRYSLFWMPNRHKDKLLGERLRLALQELGPVWIKFGQMLSTRRDLFPPHIADQLALLQDKVAPFDGKLAKQQIEAAMGGLPVEAWFDDFEIKPLASASIAQVHTARLKSNGKEVVIKVIRPDILPVIKADLKLIYRLARWVPRLLPDGRRLRPTEVVREYEKTLIDELNLLRESANAIQLRRNFEDSPMLYIPEVYPDYCSEGMMVMERIYGIPVSDVATLEKNGTNMKLLAERGVQVFFTQVFRDSFFHADMHPGNIFVSYEHPENPKYIGIDCGIVGSLNKEDKRYLAENFIAFFNRDYRKVAELHVDSGWVPPDTNVEEFEFAIRTVCEPIFEKPLAEISFGHVLLNLFNTARRFNMEVQPQLVLLQKTLLYVEGVGRQLYPQLDLWKTAKPFLESWIKDQVGIPALVRAFKEKAPFWVEKMPELPELVYDSLRQGKYLQHSVDKIARELQSNHVRQGQSRYFLGIGATLVLSGTFLLVSRPEWGLMPGWLMAGGLIAWFVGWRKTR.

Residues 124–502 (DFEIKPLASA…HVRQGQSRYF (379 aa)) enclose the Protein kinase domain. ATP contacts are provided by residues 130-138 (LASASIAQV) and Lys-153. Asp-288 acts as the Proton acceptor in catalysis. Transmembrane regions (helical) follow at residues 501–521 (YFLG…VSRP) and 522–542 (EWGL…FVGW).

Belongs to the ABC1 family. UbiB subfamily.

The protein resides in the cell inner membrane. The protein operates within cofactor biosynthesis; ubiquinone biosynthesis [regulation]. Is probably a protein kinase regulator of UbiI activity which is involved in aerobic coenzyme Q (ubiquinone) biosynthesis. The protein is Probable protein kinase UbiB of Shigella sonnei (strain Ss046).